The sequence spans 161 residues: ATP synthase subunit b 1 (161 aa).

Residues 5–25 (EFWVAVAFVIFCGIVWKAGGF) form a helical membrane-spanning segment.

It belongs to the ATPase B chain family. In terms of assembly, F-type ATPases have 2 components, F(1) - the catalytic core - and F(0) - the membrane proton channel. F(1) has five subunits: alpha(3), beta(3), gamma(1), delta(1), epsilon(1). F(0) has three main subunits: a(1), b(2) and c(10-14). The alpha and beta chains form an alternating ring which encloses part of the gamma chain. F(1) is attached to F(0) by a central stalk formed by the gamma and epsilon chains, while a peripheral stalk is formed by the delta and b chains.

The protein localises to the cell inner membrane. In terms of biological role, f(1)F(0) ATP synthase produces ATP from ADP in the presence of a proton or sodium gradient. F-type ATPases consist of two structural domains, F(1) containing the extramembraneous catalytic core and F(0) containing the membrane proton channel, linked together by a central stalk and a peripheral stalk. During catalysis, ATP synthesis in the catalytic domain of F(1) is coupled via a rotary mechanism of the central stalk subunits to proton translocation. Component of the F(0) channel, it forms part of the peripheral stalk, linking F(1) to F(0). The sequence is that of ATP synthase subunit b 1 from Methylobacterium sp. (strain 4-46).